A 261-amino-acid chain; its full sequence is Cytochrome c oxidase subunit 3 (261 aa).

Topologically, residues 1–15 are mitochondrial matrix; it reads MTHQTHAYHMVNPSP. The helical transmembrane segment at 16–34 threads the bilayer; that stretch reads WPLTGALSALLMTSGLTMW. The Mitochondrial intermembrane portion of the chain corresponds to 35–40; it reads FHFNSM. A helical transmembrane segment spans residues 41-66; that stretch reads TLLMIGLTTNMLTMYQWWRDVIREST. The Mitochondrial matrix portion of the chain corresponds to 67–72; that stretch reads FQGHHT. Residues 73–105 form a helical membrane-spanning segment; the sequence is PAVQKGLRYGMILFIISEVLFFTGFFWAFYHSS. Topologically, residues 106–128 are mitochondrial intermembrane; the sequence is LAPTPELGGCWPPTGIHPLNPLE. Residues 129–152 form a helical membrane-spanning segment; sequence VPLLNTSVLLASGVSITWAHHSLM. Topologically, residues 153–155 are mitochondrial matrix; that stretch reads EGD. Residues 156 to 183 form a helical membrane-spanning segment; sequence RKHMLQALFITITLGVYFTLLQASEYYE. The Mitochondrial intermembrane segment spans residues 184–190; sequence APFTISD. The helical transmembrane segment at 191 to 223 threads the bilayer; sequence GVYGSTFFVATGFHGLHVIIGSTFLIVCFFRQL. The Mitochondrial matrix portion of the chain corresponds to 224-232; that stretch reads KFHFTSNHH. The chain crosses the membrane as a helical span at residues 233 to 256; it reads FGFEAAAWYWHFVDVVWLFLYVSI. Residues 257–261 lie on the Mitochondrial intermembrane side of the membrane; the sequence is YWWGS.

This sequence belongs to the cytochrome c oxidase subunit 3 family. Component of the cytochrome c oxidase (complex IV, CIV), a multisubunit enzyme composed of 14 subunits. The complex is composed of a catalytic core of 3 subunits MT-CO1, MT-CO2 and MT-CO3, encoded in the mitochondrial DNA, and 11 supernumerary subunits COX4I1 (or COX4I2), COX5A, COX5B, COX6A2 (or COX6A1), COX6B1 (or COX6B2), COX6C, COX7A1 (or COX7A2), COX7B, COX7C, COX8B and NDUFA4, which are encoded in the nuclear genome. The complex exists as a monomer or a dimer and forms supercomplexes (SCs) in the inner mitochondrial membrane with NADH-ubiquinone oxidoreductase (complex I, CI) and ubiquinol-cytochrome c oxidoreductase (cytochrome b-c1 complex, complex III, CIII), resulting in different assemblies (supercomplex SCI(1)III(2)IV(1) and megacomplex MCI(2)III(2)IV(2)).

Its subcellular location is the mitochondrion inner membrane. It catalyses the reaction 4 Fe(II)-[cytochrome c] + O2 + 8 H(+)(in) = 4 Fe(III)-[cytochrome c] + 2 H2O + 4 H(+)(out). In terms of biological role, component of the cytochrome c oxidase, the last enzyme in the mitochondrial electron transport chain which drives oxidative phosphorylation. The respiratory chain contains 3 multisubunit complexes succinate dehydrogenase (complex II, CII), ubiquinol-cytochrome c oxidoreductase (cytochrome b-c1 complex, complex III, CIII) and cytochrome c oxidase (complex IV, CIV), that cooperate to transfer electrons derived from NADH and succinate to molecular oxygen, creating an electrochemical gradient over the inner membrane that drives transmembrane transport and the ATP synthase. Cytochrome c oxidase is the component of the respiratory chain that catalyzes the reduction of oxygen to water. Electrons originating from reduced cytochrome c in the intermembrane space (IMS) are transferred via the dinuclear copper A center (CU(A)) of subunit 2 and heme A of subunit 1 to the active site in subunit 1, a binuclear center (BNC) formed by heme A3 and copper B (CU(B)). The BNC reduces molecular oxygen to 2 water molecules using 4 electrons from cytochrome c in the IMS and 4 protons from the mitochondrial matrix. This Bos taurus (Bovine) protein is Cytochrome c oxidase subunit 3 (MT-CO3).